The primary structure comprises 225 residues: Transmembrane emp24 domain-containing protein p24delta11 (225 aa).

Residues 1 to 35 form the signal peptide; sequence MDLLPSRYKIHKTKLRWILTMMTMMMMMVMRRGES. At 36–193 the chain is on the lumenal side; sequence MRLDMESGNT…ELNRSTNSRM (158 aa). One can recognise a GOLD domain in the interval 45-160; that stretch reads TKCISDDIKT…ITMLEVEVRK (116 aa). A coiled-coil region spans residues 175–188; that stretch reads LIEREREMQELNRS. Omega-N-methylated arginine is present on Arg-178. The N-linked (GlcNAc...) asparagine glycan is linked to Asn-186. A helical transmembrane segment spans residues 194–210; the sequence is AALSLLSFVVTMSVAGL. At 211–225 the chain is on the cytoplasmic side; the sequence is QLRHLKSFLERKKLL. Positions 218 to 219 match the COPII vesicle coat-binding motif; that stretch reads FL. The short motif at 218–225 is the COPI vesicle coat-binding element; it reads FLERKKLL.

The protein belongs to the EMP24/GP25L family. As to quaternary structure, probably oligomerizes with other members of the EMP24/GP25L family. Associates with the COPI vesicle coat (coatomer). Associates with the COPII vesicle coat (coatomer).

It is found in the endoplasmic reticulum membrane. It localises to the golgi apparatus. The protein localises to the cis-Golgi network membrane. Its subcellular location is the golgi stack membrane. In terms of biological role, involved in vesicular protein trafficking. Mainly functions in the early secretory pathway. Thought to act as cargo receptor at the lumenal side for incorporation of secretory cargo molecules into transport vesicles and to be involved in vesicle coat formation at the cytoplasmic side. This is Transmembrane emp24 domain-containing protein p24delta11 from Arabidopsis thaliana (Mouse-ear cress).